The chain runs to 348 residues: Dihydroorotase (348 aa).

The Zn(2+) site is built by histidine 17 and histidine 19. Substrate contacts are provided by residues 19-21 and asparagine 45; that span reads HLR. Zn(2+) contacts are provided by lysine 103, histidine 140, and histidine 178. An N6-carboxylysine modification is found at lysine 103. Position 140 (histidine 140) interacts with substrate. Substrate is bound at residue leucine 223. Position 251 (aspartate 251) interacts with Zn(2+). Aspartate 251 is an active-site residue. Histidine 255 and alanine 267 together coordinate substrate.

It belongs to the metallo-dependent hydrolases superfamily. DHOase family. Class II DHOase subfamily. Homodimer. Requires Zn(2+) as cofactor.

It catalyses the reaction (S)-dihydroorotate + H2O = N-carbamoyl-L-aspartate + H(+). It functions in the pathway pyrimidine metabolism; UMP biosynthesis via de novo pathway; (S)-dihydroorotate from bicarbonate: step 3/3. Functionally, catalyzes the reversible cyclization of carbamoyl aspartate to dihydroorotate. The sequence is that of Dihydroorotase from Escherichia coli (strain UTI89 / UPEC).